The sequence spans 140 residues: Ribosomal RNA large subunit methyltransferase H (140 aa).

Positions 55 and 87 each coordinate S-adenosyl-L-methionine.

This sequence belongs to the RNA methyltransferase RlmH family. As to quaternary structure, homodimer.

The protein localises to the cytoplasm. It carries out the reaction pseudouridine(1915) in 23S rRNA + S-adenosyl-L-methionine = N(3)-methylpseudouridine(1915) in 23S rRNA + S-adenosyl-L-homocysteine + H(+). Functionally, specifically methylates the pseudouridine at position 1915 (m3Psi1915) in 23S rRNA. The chain is Ribosomal RNA large subunit methyltransferase H from Rhizorhabdus wittichii (strain DSM 6014 / CCUG 31198 / JCM 15750 / NBRC 105917 / EY 4224 / RW1) (Sphingomonas wittichii).